Reading from the N-terminus, the 172-residue chain is Adenine phosphoribosyltransferase (172 aa).

This sequence belongs to the purine/pyrimidine phosphoribosyltransferase family. As to quaternary structure, homodimer.

The protein resides in the cytoplasm. It carries out the reaction AMP + diphosphate = 5-phospho-alpha-D-ribose 1-diphosphate + adenine. It participates in purine metabolism; AMP biosynthesis via salvage pathway; AMP from adenine: step 1/1. Its function is as follows. Catalyzes a salvage reaction resulting in the formation of AMP, that is energically less costly than de novo synthesis. The chain is Adenine phosphoribosyltransferase from Streptococcus uberis (strain ATCC BAA-854 / 0140J).